The following is a 341-amino-acid chain: tRNA N6-adenosine threonylcarbamoyltransferase (341 aa).

His111 and His115 together coordinate Fe cation. Residues 134-138, Asp167, Gly180, and Asn276 contribute to the substrate site; that span reads LVSGG. Asp304 contacts Fe cation.

The protein belongs to the KAE1 / TsaD family. Fe(2+) is required as a cofactor.

It localises to the cytoplasm. It carries out the reaction L-threonylcarbamoyladenylate + adenosine(37) in tRNA = N(6)-L-threonylcarbamoyladenosine(37) in tRNA + AMP + H(+). Required for the formation of a threonylcarbamoyl group on adenosine at position 37 (t(6)A37) in tRNAs that read codons beginning with adenine. Is involved in the transfer of the threonylcarbamoyl moiety of threonylcarbamoyl-AMP (TC-AMP) to the N6 group of A37, together with TsaE and TsaB. TsaD likely plays a direct catalytic role in this reaction. The protein is tRNA N6-adenosine threonylcarbamoyltransferase of Azotobacter vinelandii (strain DJ / ATCC BAA-1303).